The chain runs to 562 residues: Sensor histidine kinase MtrB (562 aa).

The next 2 membrane-spanning stretches (helical) occupy residues 42 to 62 (VVAL…FVLT) and 213 to 233 (GTMA…ALLV). Positions 235–287 (RQVVVPVRSASRIAERFAEGHLSERMPVRGEDDMARLAVSFNDMAESLSRQIT) constitute an HAMP domain. Residues 302–519 (DVSHELRTPL…CFRLTLPLVR (218 aa)) enclose the Histidine kinase domain. Positions 526–562 (SPLPMKPILQPSPQASTAGQQHGTQRQRLREHAERSR) are disordered. A compositionally biased stretch (polar residues) spans 536 to 551 (PSPQASTAGQQHGTQR). Residues 553-562 (RLREHAERSR) show a composition bias toward basic and acidic residues.

It localises to the cell membrane. It catalyses the reaction ATP + protein L-histidine = ADP + protein N-phospho-L-histidine.. In terms of biological role, member of the two-component regulatory system MtrA/MtrB. Seems to function as a membrane-associated protein kinase that phosphorylates MtrA in response to environmental signals. This Mycobacterium leprae (strain TN) protein is Sensor histidine kinase MtrB (mtrB).